Here is a 601-residue protein sequence, read N- to C-terminus: Glutathione-regulated potassium-efflux system protein KefB (601 aa).

A run of 13 helical transmembrane segments spans residues 4–24 (SDFLLAGVLFLFAAVAAVPLA), 29–49 (IGAVLGYLLAGIAIGPWGLGF), 55–75 (EILHFSELGVVFLMFIIGLEL), 87–107 (IFGVGAAQVLLSSALLAGLLM), 115–135 (AAVVGGIGLAMSSTAMALQLM), 152–172 (VLLFQDLAVIPALALVPLLAG), 177–197 (HFDWMKIGMKVLAFVGMLIGG), 207–227 (FIAASGVREVFTAATLLLVLG), 230–250 (LFMDALGLSMALGTFIAGVLL), 268–288 (GLLLGLFFISVGMSLNLGVLY), 291–311 (LLWVVISVVVLVAVKILVLYL), 324–344 (MQFAGVLSQGGEFAFVLFSTA), and 356–376 (ALLLVTVTLSMMTTPLLMKLV). Positions 400-519 (KPQVIVVGFG…AGVTQFSRET (120 aa)) constitute an RCK N-terminal domain.

This sequence belongs to the monovalent cation:proton antiporter 2 (CPA2) transporter (TC 2.A.37) family. KefB subfamily. In terms of assembly, interacts with the regulatory subunit KefG.

The protein localises to the cell inner membrane. In terms of biological role, pore-forming subunit of a potassium efflux system that confers protection against electrophiles. Catalyzes K(+)/H(+) antiport. In Escherichia coli O81 (strain ED1a), this protein is Glutathione-regulated potassium-efflux system protein KefB.